A 181-amino-acid chain; its full sequence is UPF0177 protein YbdI (181 aa).

The next 5 membrane-spanning stretches (helical) occupy residues 10–30, 41–61, 81–101, 114–134, and 161–181; these read ILFL…GVFA, LLWL…AHYL, FVDS…IAPI, FFSH…LIHT, and SDSI…HIII.

The protein belongs to the UPF0177 family.

It is found in the cell membrane. The chain is UPF0177 protein YbdI (ybdI) from Lactococcus lactis subsp. lactis (strain IL1403) (Streptococcus lactis).